Consider the following 163-residue polypeptide: Ribosome maturation factor RimP (163 aa).

It belongs to the RimP family.

Its subcellular location is the cytoplasm. Required for maturation of 30S ribosomal subunits. This Bordetella petrii (strain ATCC BAA-461 / DSM 12804 / CCUG 43448) protein is Ribosome maturation factor RimP.